The sequence spans 695 residues: Sodium-dependent phosphate transport protein 2B (695 aa).

Residues Met1 to Pro44 form a disordered region. Over Met1 to Lys90 the chain is Cytoplasmic. A helical membrane pass occupies residues Ile91–Phe111. Residues Val112 to Asn136 lie on the Extracellular side of the membrane. A helical membrane pass occupies residues Asn137–Val157. The Cytoplasmic portion of the chain corresponds to Gln158–Ala213. A helical transmembrane segment spans residues Phe214–Leu234. Residues Glu235–Ala363 lie on the Extracellular side of the membrane. Asn295, Asn313, Asn321, Asn340, and Asn356 each carry an N-linked (GlcNAc...) asparagine glycan. A disulfide bridge connects residues Cys303 and Cys350. The chain crosses the membrane as a helical span at residues Val364–Val384. Residues Lys385–Pro408 lie on the Cytoplasmic side of the membrane. The chain crosses the membrane as a helical span at residues Phe409–Ile429. Over Val430–Gln486 the chain is Extracellular. The chain crosses the membrane as a helical span at residues Ile487–Phe507. The Cytoplasmic portion of the chain corresponds to Thr508–Arg526. Residues Trp527–Leu547 traverse the membrane as a helical segment. Topologically, residues Ser548–Gly551 are extracellular. Residues Trp552–Leu572 form a helical membrane-spanning segment. Residues Arg573–Phe695 lie on the Cytoplasmic side of the membrane.

Belongs to the SLC34A transporter family. As to expression, highly expressed in the lung, in type II alveolar cells. Moderately expressed in kidney followed by small intestine.

The protein localises to the apical cell membrane. The enzyme catalyses 3 Na(+)(out) + phosphate(out) = 3 Na(+)(in) + phosphate(in). In terms of biological role, involved in actively transporting phosphate into cells via Na(+) cotransport. This chain is Sodium-dependent phosphate transport protein 2B (Slc34a2), found in Rattus norvegicus (Rat).